Reading from the N-terminus, the 575-residue chain is Arginine--tRNA ligase (575 aa).

Residues 131-141 carry the 'HIGH' region motif; the sequence is ANPTGPLHVGH.

It belongs to the class-I aminoacyl-tRNA synthetase family. In terms of assembly, monomer.

It localises to the cytoplasm. The enzyme catalyses tRNA(Arg) + L-arginine + ATP = L-arginyl-tRNA(Arg) + AMP + diphosphate. The polypeptide is Arginine--tRNA ligase (Jannaschia sp. (strain CCS1)).